The chain runs to 345 residues: Papain (345 aa).

The N-terminal stretch at 1-18 (MAMIPSISKLLFVAICLF) is a signal peptide. Positions 19–133 (VYMGLSFGDF…EEVLNDGDVN (115 aa)) are cleaved as a propeptide — activation peptide. Cystine bridges form between cysteine 155–cysteine 196, cysteine 189–cysteine 228, and cysteine 286–cysteine 333. Cysteine 158 is an active-site residue. An E64-binding site is contributed by cysteine 158. Cysteine 158 contacts leupeptin. Active-site residues include histidine 292 and asparagine 308.

The protein belongs to the peptidase C1 family.

It carries out the reaction Hydrolysis of proteins with broad specificity for peptide bonds, but preference for an amino acid bearing a large hydrophobic side chain at the P2 position. Does not accept Val in P1'.. Repressed by the active-site-directed cysteine protease inhibitor E64 (L-trans-epoxysuccinyl-leucylamide-(4-guanido)-butane) produced by Aspergillus japonicus. Inhibited by the inhibitor of cysteine proteases from Trypanosoma brucei (TbICP, rhodesain) and Colocasia esculenta cv. Kaohsiung no. 1 (CeCPI, tarocystatin). Repressed by leupeptin, a peptidic cysteine, serine and threonine protease inhibitor. Functionally, cysteine proteinase with a high level of diversity in substrate specificity, an amino acid bearing a large hydrophobic side chain at the P2 position is preferred. This is Papain from Carica papaya (Papaya).